We begin with the raw amino-acid sequence, 553 residues long: Methionine--tRNA ligase (553 aa).

Positions 12-22 match the 'HIGH' region motif; that stretch reads PYANSQLHLGH. Positions 144, 147, 157, and 160 each coordinate Zn(2+). The 'KMSKS' region motif lies at 332–336; sequence KFSKS. Lys-335 provides a ligand contact to ATP.

The protein belongs to the class-I aminoacyl-tRNA synthetase family. MetG type 1 subfamily. In terms of assembly, monomer. Zn(2+) is required as a cofactor.

The protein resides in the cytoplasm. The catalysed reaction is tRNA(Met) + L-methionine + ATP = L-methionyl-tRNA(Met) + AMP + diphosphate. Functionally, is required not only for elongation of protein synthesis but also for the initiation of all mRNA translation through initiator tRNA(fMet) aminoacylation. This Dehalococcoides mccartyi (strain ATCC BAA-2100 / JCM 16839 / KCTC 5957 / BAV1) protein is Methionine--tRNA ligase.